Consider the following 390-residue polypeptide: 3-ketosteroid-9-alpha-monooxygenase, oxygenase component (390 aa).

Residues 32–134 (WHCLGLLRDF…TLERNGQLYV (103 aa)) enclose the Rieske domain. [2Fe-2S] cluster is bound by residues Cys-73, His-75, Cys-92, and His-95. The Fe cation site is built by Asn-181, His-187, His-192, and Asp-311.

Homotrimer. The two-component system 3-ketosteroid-9-alpha-monooxygenase is composed of an oxygenase component KshA and a reductase component KshB. It depends on [2Fe-2S] cluster as a cofactor. Fe cation serves as cofactor.

It carries out the reaction androsta-1,4-diene-3,17-dione + 2 reduced [2Fe-2S]-[ferredoxin] + O2 + 2 H(+) = 9alpha-hydroxyandrosta-1,4-diene-3,17-dione + 2 oxidized [2Fe-2S]-[ferredoxin] + H2O. It participates in steroid metabolism; cholesterol degradation. In terms of biological role, probably involved in the degradation of cholesterol. In vitro, catalyzes the introduction of a 9alpha-hydroxyl moiety into the ring B of 3-ketosteroid substrates such as 1,4-androstadiene-3,17-dione (ADD), 4-androstene-3,17-dione (AD), 4-androstene-17beta-ol-3-one (testosterone), 4-pregnene-3,20-dione (progesterone), 19-nor-4-androstene-3,17-dione, 1-(5alpha)-androstene-3,17-dione, 5alpha-androstane-3,17-dione, 5beta-androstane-3,17-dione, 5alpha-androstane-17beta-ol-3-one (stanolon), 11beta-hydrocortisone, 3-oxo-23,24-bisnorcholesta-4-en-22-oate (4-BNC), 23,24-bisnorcholesta-4-ene-22-oate, 3-oxo-23,24-bisnorcholesta-1,4-dien-22-oate (1,4-BNC) and 3-oxo-23,24-bisnorcholesta-1,4-dien-22-oyl-coenzyme A thioester (1,4-BNC-CoA). KshA5 has the broadest substrate range without a clear substrate preference and is active with Delta-4, Delta-1,4, 5alpha-H and 5beta-H steroids, as well as with steroids having bulky aliphatic side chains and an isopropionyl side chain at C17. The chain is 3-ketosteroid-9-alpha-monooxygenase, oxygenase component from Rhodococcus rhodochrous.